The chain runs to 1046 residues: MAKVRVYELAKEFGVESKVVMAKLQELGEFVRSASSTIEAPVVRKLTDALQQGNGGKAAPRKAAPAKPGAPSPAQAARPAAPRPPAPKPAAAERPAAAERPAAAPAAPGPRPGPKPAPRPAPAAPAPAAPEFTAPPSAPAAPAAAASGPRPGARPGAPKPGGARPATPGQGQGGQVRGERTDRGDRGDRGDRQGAARPGGQAPRPGARPAGPRPGNNPFTSGGSTGMARPQAPRPGGAPRPGGAGAPGGPRPQGAGGQDRAPRPQGGPGGAPRPQGGPGGARPTPGGMPRPQAPRPGGAPGGNRPNPGMMPQRPAAGPRPGGGGPGGRGPGGGGRPGGPGGGGGRPGGGGFAGRPGGGGGGFAGRPGGPGGGGGGFAGRPGGPGGGGGGRPGFGGRPGGPGGRGGTQGAFGRPGGPARRGRKSKRQRRQEYEAMQAPSVGGVMLPRGNGQSVRLSRGASLTDFAEKIGANPASLVGVMMNLGEMVTATQSVSDETLKLLADEMNFVLEIVSPEEEDRELLESFDIEFGEDEGGEEFLVARPPVVTVMGHVDHGKTRLLDTIRKTNVVAGEAGGITQHIGAYQVTTEVNDEERKITFIDTPGHEAFTAMRARGAKSTDIAILVVAANDGVMPQTIEALNHAKAADVPIVVAVNKIDVEGADPTKVRGQLTEFGLVAEEYGGDTMFVDISAKQGLNIESLLEAVVLTADASLDLRANPEQDAQGIAIESHLDRGRGAVATVLVQRGTLRVGDTMVVGDAYGRVRAMLDDKGENVEEAGPSTPVLVLGLTNVPGAGDNFLVVDEDRTARQIAEKRAARERNANFARRGVRFSLENLDEALKAGLVQELNLIIKGDASGSVEALESSLLQLDVGEEVDIRILHRGVGAVTESDINLATGSDAIVIGFNVRAAGRAAQMAEREGVDVRYYSVIYQAIEEIEAALKGMLKPEYEEVELGTAEIREVFKSSKLGNIAGVLVRSGEVKRNTKARLIRDGKVIAESLNISGLRRFKDDVTEIREGFEGGINLGNFNDIKVDDVIATYEMREKPRS.

The segment at 49–450 (ALQQGNGGKA…GVMLPRGNGQ (402 aa)) is disordered. Low complexity-rich tracts occupy residues 57–80 (KAAPRKAAPAKPGAPSPAQAARPA) and 89–106 (PAAAERPAAAERPAAAPA). Pro residues predominate over residues 107–128 (APGPRPGPKPAPRPAPAAPAPA). The span at 129 to 169 (APEFTAPPSAPAAPAAAASGPRPGARPGAPKPGGARPATPG) shows a compositional bias: low complexity. Over residues 177 to 194 (RGERTDRGDRGDRGDRQG) the composition is skewed to basic and acidic residues. Residues 195–214 (AARPGGQAPRPGARPAGPRP) show a composition bias toward low complexity. Composition is skewed to gly residues over residues 239 to 248 (PRPGGAGAPG) and 266 to 280 (GGPGGAPRPQGGPGG). The span at 302-318 (GNRPNPGMMPQRPAAGP) shows a compositional bias: low complexity. Gly residues predominate over residues 319–414 (RPGGGGPGGR…GTQGAFGRPG (96 aa)). Positions 418–427 (RRGRKSKRQR) are enriched in basic residues. The region spanning 539–711 (ARPPVVTVMG…VVLTADASLD (173 aa)) is the tr-type G domain. Residues 548–555 (GHVDHGKT) form a G1 region. 548–555 (GHVDHGKT) provides a ligand contact to GTP. The G2 stretch occupies residues 573–577 (GITQH). Residues 598–601 (DTPG) are G3. GTP contacts are provided by residues 598 to 602 (DTPGH) and 652 to 655 (NKID). The interval 652–655 (NKID) is G4. The G5 stretch occupies residues 688 to 690 (SAK).

It belongs to the TRAFAC class translation factor GTPase superfamily. Classic translation factor GTPase family. IF-2 subfamily.

Its subcellular location is the cytoplasm. In terms of biological role, one of the essential components for the initiation of protein synthesis. Protects formylmethionyl-tRNA from spontaneous hydrolysis and promotes its binding to the 30S ribosomal subunits. Also involved in the hydrolysis of GTP during the formation of the 70S ribosomal complex. In Streptomyces avermitilis (strain ATCC 31267 / DSM 46492 / JCM 5070 / NBRC 14893 / NCIMB 12804 / NRRL 8165 / MA-4680), this protein is Translation initiation factor IF-2.